The primary structure comprises 502 residues: Probable cytosol aminopeptidase (502 aa).

2 residues coordinate Mn(2+): lysine 269 and aspartate 274. The active site involves lysine 281. Aspartate 292, aspartate 351, and glutamate 353 together coordinate Mn(2+). Arginine 355 is an active-site residue.

The protein belongs to the peptidase M17 family. Mn(2+) is required as a cofactor.

It localises to the cytoplasm. The catalysed reaction is Release of an N-terminal amino acid, Xaa-|-Yaa-, in which Xaa is preferably Leu, but may be other amino acids including Pro although not Arg or Lys, and Yaa may be Pro. Amino acid amides and methyl esters are also readily hydrolyzed, but rates on arylamides are exceedingly low.. It catalyses the reaction Release of an N-terminal amino acid, preferentially leucine, but not glutamic or aspartic acids.. Presumably involved in the processing and regular turnover of intracellular proteins. Catalyzes the removal of unsubstituted N-terminal amino acids from various peptides. The polypeptide is Probable cytosol aminopeptidase (Vibrio vulnificus (strain CMCP6)).